Consider the following 131-residue polypeptide: Period circadian protein (131 aa).

A disordered region spans residues 29-109 (VTAPVELDPP…NSAGGASGGV (81 aa)). Residues 71-93 (SGNFTTGSNVRMSSVTNTSNAGT) are compositionally biased toward low complexity. The span at 94 to 109 (GTSGGGNSAGGASGGV) shows a compositional bias: gly residues.

Forms a heterodimer with timeless (TIM); the complex then translocates into the nucleus. Phosphorylated with a circadian rhythmicity, probably by the double-time protein (dbt). Phosphorylation could be implicated in the stability of per monomer and in the formation of heterodimer per-tim.

It is found in the nucleus. It localises to the cytoplasm. The protein localises to the perinuclear region. In terms of biological role, essential for biological clock functions. Determines the period length of circadian and ultradian rhythms; an increase in PER dosage leads to shortened circadian rhythms and a decrease leads to lengthened circadian rhythms. Essential for the circadian rhythmicity of locomotor activity, eclosion behavior, and for the rhythmic component of the male courtship song that originates in the thoracic nervous system. The biological cycle depends on the rhythmic formation and nuclear localization of the TIM-PER complex. Light induces the degradation of TIM, which promotes elimination of PER. Nuclear activity of the heterodimer coordinatively regulates PER and TIM transcription through a negative feedback loop. Behaves as a negative element in circadian transcriptional loop. Does not appear to bind DNA, suggesting indirect transcriptional inhibition. This chain is Period circadian protein (per), found in Zaprionus tuberculatus (Vinegar fly).